Here is a 206-residue protein sequence, read N- to C-terminus: dCTP deaminase, dUMP-forming (206 aa).

Residues 117–122 (RSSFGR), aspartate 135, 143–145 (TLE), glutamine 163, tyrosine 177, lysine 184, and glutamine 188 contribute to the dCTP site. The Proton donor/acceptor role is filled by glutamate 145.

The protein belongs to the dCTP deaminase family. In terms of assembly, homotrimer.

The enzyme catalyses dCTP + 2 H2O = dUMP + NH4(+) + diphosphate. The protein operates within pyrimidine metabolism; dUMP biosynthesis; dUMP from dCTP: step 1/1. Bifunctional enzyme that catalyzes both the deamination of dCTP to dUTP and the hydrolysis of dUTP to dUMP without releasing the toxic dUTP intermediate. In Methanococcus maripaludis (strain C5 / ATCC BAA-1333), this protein is dCTP deaminase, dUMP-forming.